We begin with the raw amino-acid sequence, 1145 residues long: Structure-specific endonuclease subunit SLX4 (1145 aa).

Residues 48-108 (ADIPVQPDPP…GKSKQQPSIS (61 aa)) form a disordered region. The stretch at 321-372 (ERETQKCRQLRQQHELVYAELERYYGDPQKLEEEVMQELDELEKLVADNMIE) forms a coiled coil. The span at 382-393 (EAESSSTGSSPS) shows a compositional bias: low complexity. 3 disordered regions span residues 382-442 (EAES…EDEP), 613-634 (QSSHQLGILTTPNDTEHSSSFS), and 666-689 (SAEKRVSPAASPYKQSDASVDLTQ). The span at 395 to 410 (EPPDKRPKMTMEDKEN) shows a compositional bias: basic and acidic residues. Composition is skewed to polar residues over residues 411-430 (LQPTTSKASLTVPAQSTRCT), 613-633 (QSSHQLGILTTPNDTEHSSSF), and 678-689 (YKQSDASVDLTQ).

This sequence belongs to the SLX4 family. As to quaternary structure, forms a heterodimer with SLX1. Interacts with mei-9; catalytic subunit of the MEI-9-ERCC1 endonuclease.

It is found in the nucleus. Functionally, regulatory subunit that interacts with and increases the activity of different structure-specific endonucleases. Has several distinct roles in protecting genome stability by resolving diverse forms of deleterious DNA structures originating from replication and recombination intermediates and from DNA damage. Component of the SLX1-SLX4 structure-specific endonuclease that resolves DNA secondary structures generated during DNA repair and recombination. Has endonuclease activity towards branched DNA substrates, introducing single-strand cuts in duplex DNA close to junctions with ss-DNA. Interacts with the structure-specific MEI-9-ERCC1 endonuclease to generate meiotic crossovers. The protein is Structure-specific endonuclease subunit SLX4 (mus312) of Drosophila melanogaster (Fruit fly).